A 490-amino-acid chain; its full sequence is Solute carrier family 2, facilitated glucose transporter member 1 (490 aa).

Topologically, residues 1–10 (MESGSKMTAR) are cytoplasmic. A helical transmembrane segment spans residues 11–32 (LMLAVGGAVLGSLQFGYNTGVI). The Extracellular portion of the chain corresponds to 33–65 (NRPQKVIEDFYNHTWLYRYEEPISPATLTTLWS). N-linked (GlcNAc...) asparagine glycosylation occurs at Asn44. Residues 66–86 (LSVAIFSVGGMIGSFSVGLFV) traverse the membrane as a helical segment. At 87-89 (NRF) the chain is on the cytoplasmic side. A helical transmembrane segment spans residues 90–111 (GRRNSMLMSNILAFLAAVLMGF). Residues 112 to 119 (SKMALSFE) are Extracellular-facing. The helical transmembrane segment at 120–143 (MLILGRFIIGLYSGLTTGFVPMYV) threads the bilayer. Topologically, residues 144-154 (GEVSPTALRGA) are cytoplasmic. The chain crosses the membrane as a helical span at residues 155-175 (LGTFHQLGIVLGILIAQVFGL). A D-glucose-binding site is contributed by Gln160. Residues 176–184 (DLIMGNDSL) are Extracellular-facing. Residues 185-205 (WPLLLGFIFVPALLQCIILPF) traverse the membrane as a helical segment. The Cytoplasmic portion of the chain corresponds to 206–270 (APESPRFLLI…LFRSPMYRQP (65 aa)). The chain crosses the membrane as a helical span at residues 271-292 (ILIAIVLQLSQQLSGINAVFYY). D-glucose contacts are provided by residues 281–282 (QQ) and Asn287. Residues 293 to 305 (STSIFEKSGVEQP) are Extracellular-facing. Residues 306-327 (VYATIGSGVVNTAFTVVSLFVV) form a helical membrane-spanning segment. Residue Asn316 coordinates D-glucose. Residues 328–333 (ERAGRR) lie on the Cytoplasmic side of the membrane. The chain crosses the membrane as a helical span at residues 334–354 (TLHLIGLAGMAGCAILMTIAL). Residues 355-364 (TLLDQMPWMS) lie on the Extracellular side of the membrane. A helical transmembrane segment spans residues 365–387 (YLSIVAIFGFVAFFEIGPGPIPW). Residues Glu379 and Trp387 each coordinate D-glucose. Topologically, residues 388–400 (FIVAELFSQGPRP) are cytoplasmic. The helical transmembrane segment at 401-421 (AAFAVAGLSNWTSNFIVGMGF) threads the bilayer. At 422–428 (QYIAQLC) the chain is on the extracellular side. The helical transmembrane segment at 429-449 (GSYVFIIFTVLLVLFFIFTYF) threads the bilayer. Residues 450 to 490 (KVPETKGRTFDEIAYRFRQGGASQSDKTPDEFHSLGADSQV) are Cytoplasmic-facing. Residues 470-490 (GASQSDKTPDEFHSLGADSQV) are disordered.

It belongs to the major facilitator superfamily. Sugar transporter (TC 2.A.1.1) family. Glucose transporter subfamily. Interacts with isoform 1 of BSG. As to expression, retinal cones (at protein level).

The protein resides in the cell membrane. It is found in the photoreceptor inner segment. It catalyses the reaction D-glucose(out) = D-glucose(in). Functionally, facilitative glucose transporter, which is responsible for constitutive or basal glucose uptake. Has a very broad substrate specificity; can transport a wide range of aldoses including both pentoses and hexoses. Most important energy carrier of the brain: present at the blood-brain barrier and assures the energy-independent, facilitative transport of glucose into the brain. In association with BSG and NXNL1, promotes retinal cone survival by increasing glucose uptake into photoreceptors. Required for mesendoderm differentiation. The polypeptide is Solute carrier family 2, facilitated glucose transporter member 1 (Gallus gallus (Chicken)).